Consider the following 383-residue polypeptide: Putative F-box protein At3g22650 (383 aa).

Residues 3–50 enclose the F-box domain; the sequence is SCERSLLPIDIIEEICCRIPVEYLTQFKLTCKQWFALLKDKRFIYKYL.

The protein is Putative F-box protein At3g22650 of Arabidopsis thaliana (Mouse-ear cress).